A 153-amino-acid chain; its full sequence is Arginine repressor (153 aa).

Belongs to the ArgR family.

Its subcellular location is the cytoplasm. It functions in the pathway amino-acid biosynthesis; L-arginine biosynthesis [regulation]. Regulates arginine biosynthesis genes. This is Arginine repressor from Actinobacillus pleuropneumoniae serotype 3 (strain JL03).